The sequence spans 533 residues: Bifunctional purine biosynthesis protein PurH (533 aa).

Residues 1 to 148 (MQPNRPIRQA…KNHQDVAIVV (148 aa)) form the MGS-like domain.

This sequence belongs to the PurH family.

It carries out the reaction (6R)-10-formyltetrahydrofolate + 5-amino-1-(5-phospho-beta-D-ribosyl)imidazole-4-carboxamide = 5-formamido-1-(5-phospho-D-ribosyl)imidazole-4-carboxamide + (6S)-5,6,7,8-tetrahydrofolate. It catalyses the reaction IMP + H2O = 5-formamido-1-(5-phospho-D-ribosyl)imidazole-4-carboxamide. The protein operates within purine metabolism; IMP biosynthesis via de novo pathway; 5-formamido-1-(5-phospho-D-ribosyl)imidazole-4-carboxamide from 5-amino-1-(5-phospho-D-ribosyl)imidazole-4-carboxamide (10-formyl THF route): step 1/1. Its pathway is purine metabolism; IMP biosynthesis via de novo pathway; IMP from 5-formamido-1-(5-phospho-D-ribosyl)imidazole-4-carboxamide: step 1/1. This is Bifunctional purine biosynthesis protein PurH from Pasteurella multocida (strain Pm70).